Consider the following 201-residue polypeptide: ATP synthase subunit b 2 (201 aa).

Residues 1-17 show a composition bias toward polar residues; sequence MAEQKNPLTTPSPNADT. The interval 1-39 is disordered; the sequence is MAEQKNPLTTPSPNADTTIVPAGSPHTHTEQPSGGHGGA. The helical transmembrane segment at 47-66 threads the bilayer; that stretch reads TFLSQLIWLALAFGLLYYLM.

Belongs to the ATPase B chain family. F-type ATPases have 2 components, F(1) - the catalytic core - and F(0) - the membrane proton channel. F(1) has five subunits: alpha(3), beta(3), gamma(1), delta(1), epsilon(1). F(0) has three main subunits: a(1), b(2) and c(10-14). The alpha and beta chains form an alternating ring which encloses part of the gamma chain. F(1) is attached to F(0) by a central stalk formed by the gamma and epsilon chains, while a peripheral stalk is formed by the delta and b chains.

The protein resides in the cell inner membrane. Its function is as follows. F(1)F(0) ATP synthase produces ATP from ADP in the presence of a proton or sodium gradient. F-type ATPases consist of two structural domains, F(1) containing the extramembraneous catalytic core and F(0) containing the membrane proton channel, linked together by a central stalk and a peripheral stalk. During catalysis, ATP synthesis in the catalytic domain of F(1) is coupled via a rotary mechanism of the central stalk subunits to proton translocation. Functionally, component of the F(0) channel, it forms part of the peripheral stalk, linking F(1) to F(0). The b'-subunit is a diverged and duplicated form of b found in plants and photosynthetic bacteria. The chain is ATP synthase subunit b 2 (atpF2) from Methylorubrum extorquens (strain PA1) (Methylobacterium extorquens).